A 267-amino-acid chain; its full sequence is Outer membrane protein assembly factor BamD (267 aa).

Positions 1–16 (MKKILLTVSLGLALSA) are cleaved as a signal peptide. Cys-17 carries N-palmitoyl cysteine lipidation. Cys-17 carries the S-diacylglycerol cysteine lipid modification.

It belongs to the BamD family. In terms of assembly, part of the Bam complex.

The protein localises to the cell outer membrane. Its function is as follows. Part of the outer membrane protein assembly complex, which is involved in assembly and insertion of beta-barrel proteins into the outer membrane. Required for efficient transformation of Neisseria meningitidis by species-related DNA. The sequence is that of Outer membrane protein assembly factor BamD from Neisseria meningitidis serogroup B (strain ATCC BAA-335 / MC58).